We begin with the raw amino-acid sequence, 127 residues long: Large ribosomal subunit protein bL17 (127 aa).

The protein belongs to the bacterial ribosomal protein bL17 family. As to quaternary structure, part of the 50S ribosomal subunit. Contacts protein L32.

The polypeptide is Large ribosomal subunit protein bL17 (Escherichia fergusonii (strain ATCC 35469 / DSM 13698 / CCUG 18766 / IAM 14443 / JCM 21226 / LMG 7866 / NBRC 102419 / NCTC 12128 / CDC 0568-73)).